The following is a 264-amino-acid chain: MKNYSSLIIGGKKFSSRLMVGTGKYKSSQDMVESLSNSETEIITVAVRRIKNEQSGENLLEKINWEKYWMLPNTAGCVNSDEAVRIAILGRELAKLSGQEENNFVKLEVIPDKKYLLPDPIETLKAAEILIKKGFAVLPYINADPILAKRLEEIGCATVMPLGSPIGSGQGLLNLSNIRIIIENAKVPVIIDAGIGVPSEASQAMEIGADGVLINSAIAQAANPPLMAQAINYSVKAGRQAFLAGRIKKQDFAVASSPEKNISI.

The active-site Schiff-base intermediate with DXP is Lys-106. 1-deoxy-D-xylulose 5-phosphate contacts are provided by residues Gly-167, Ala-193–Gly-194, and Asn-215–Ser-216.

Belongs to the ThiG family. As to quaternary structure, homotetramer. Forms heterodimers with either ThiH or ThiS.

Its subcellular location is the cytoplasm. It carries out the reaction [ThiS sulfur-carrier protein]-C-terminal-Gly-aminoethanethioate + 2-iminoacetate + 1-deoxy-D-xylulose 5-phosphate = [ThiS sulfur-carrier protein]-C-terminal Gly-Gly + 2-[(2R,5Z)-2-carboxy-4-methylthiazol-5(2H)-ylidene]ethyl phosphate + 2 H2O + H(+). It functions in the pathway cofactor biosynthesis; thiamine diphosphate biosynthesis. Catalyzes the rearrangement of 1-deoxy-D-xylulose 5-phosphate (DXP) to produce the thiazole phosphate moiety of thiamine. Sulfur is provided by the thiocarboxylate moiety of the carrier protein ThiS. In vitro, sulfur can be provided by H(2)S. The protein is Thiazole synthase of Prochlorococcus marinus (strain MIT 9301).